Reading from the N-terminus, the 162-residue chain is Regulator of sigma D (162 aa).

The protein belongs to the Rsd/AlgQ family. As to quaternary structure, interacts with RpoD.

It localises to the cytoplasm. In terms of biological role, binds RpoD and negatively regulates RpoD-mediated transcription activation by preventing the interaction between the primary sigma factor RpoD with the catalytic core of the RNA polymerase and with promoter DNA. May be involved in replacement of the RNA polymerase sigma subunit from RpoD to RpoS during the transition from exponential growth to the stationary phase. The polypeptide is Regulator of sigma D (Salmonella choleraesuis (strain SC-B67)).